Reading from the N-terminus, the 208-residue chain is Glutathione S-transferase 1 (208 aa).

Positions 1 to 80 (MDFYYLPGSA…YLVEKYGKTD (80 aa)) constitute a GST N-terminal domain. Residues serine 9, 50-52 (HTI), and 64-66 (ESR) contribute to the glutathione site. Residues 86-207 (CPKKRAVINQ…AGCLEFKKYF (122 aa)) form the GST C-terminal domain.

This sequence belongs to the GST superfamily. Theta family. Homodimer.

The enzyme catalyses RX + glutathione = an S-substituted glutathione + a halide anion + H(+). In terms of biological role, conjugation of reduced glutathione to a wide number of exogenous and endogenous hydrophobic electrophiles. The polypeptide is Glutathione S-transferase 1 (Gst1) (Musca domestica (House fly)).